Here is a 1438-residue protein sequence, read N- to C-terminus: DNA polymerase III PolC-type (1438 aa).

The Exonuclease domain occupies 422 to 578 (YVVFDVETTG…YDTEATAYIF (157 aa)).

Belongs to the DNA polymerase type-C family. PolC subfamily.

Its subcellular location is the cytoplasm. The catalysed reaction is DNA(n) + a 2'-deoxyribonucleoside 5'-triphosphate = DNA(n+1) + diphosphate. Functionally, required for replicative DNA synthesis. This DNA polymerase also exhibits 3' to 5' exonuclease activity. The polypeptide is DNA polymerase III PolC-type (Staphylococcus aureus (strain bovine RF122 / ET3-1)).